Here is a 509-residue protein sequence, read N- to C-terminus: Phosphoenolpyruvate carboxylase (509 aa).

It belongs to the PEPCase type 2 family. Homotetramer. Mg(2+) serves as cofactor.

It catalyses the reaction oxaloacetate + phosphate = phosphoenolpyruvate + hydrogencarbonate. Functionally, catalyzes the irreversible beta-carboxylation of phosphoenolpyruvate (PEP) to form oxaloacetate (OAA), a four-carbon dicarboxylic acid source for the tricarboxylic acid cycle. The protein is Phosphoenolpyruvate carboxylase of Metallosphaera sedula (strain ATCC 51363 / DSM 5348 / JCM 9185 / NBRC 15509 / TH2).